Reading from the N-terminus, the 64-residue chain is Bowman-Birk type trypsin inhibitor TI1 (64 aa).

5 disulfides stabilise this stretch: cysteine 9/cysteine 61, cysteine 10/cysteine 25, cysteine 15/cysteine 23, cysteine 32/cysteine 39, and cysteine 36/cysteine 49.

Belongs to the Bowman-Birk serine protease inhibitor family.

This is Bowman-Birk type trypsin inhibitor TI1 from Coix lacryma-jobi (Job's tears).